The primary structure comprises 60 residues: Large ribosomal subunit protein uL30 (60 aa).

The protein belongs to the universal ribosomal protein uL30 family. Part of the 50S ribosomal subunit.

The sequence is that of Large ribosomal subunit protein uL30 from Salinispora tropica (strain ATCC BAA-916 / DSM 44818 / JCM 13857 / NBRC 105044 / CNB-440).